A 287-amino-acid polypeptide reads, in one-letter code: Complement C1q-like protein 2 (287 aa).

A signal peptide spans 1 to 21 (MALGLLIAVPLLLQAAPPGAA). The interval 65–144 (LSANPPPPFI…GTGGGGDTEG (80 aa)) is disordered. The 43-residue stretch at 76-118 (GPKGDPGRPGKPGPRGPPGEPGPPGPRGPPGEKGDSGRPGLPG) folds into the Collagen-like domain. A compositionally biased stretch (pro residues) spans 84 to 104 (PGKPGPRGPPGEPGPPGPRGP). Residues 127–141 (GGVGVVSGGTGGGGD) show a composition bias toward gly residues. Residues 154–287 (FSGPKIAFYV…TFSGFLLYPD (134 aa)) form the C1q domain.

As to quaternary structure, forms homotrimers which can further assemble to form higher-order oligomeric complexes. Interacts with ADGRB3. May interact with ERFE. Forms heterooligomers with C1QL3 and C1QL4, when proteins are coexpressed; this interaction does not occur after secretion. Glycosylated, but not with N-linked glycans. Highest expression in eye, followed by placenta and brain, intermediate expression in adipose tissue and lowest expression in lymph node and testis.

Its subcellular location is the secreted. In terms of biological role, may regulate the number of excitatory synapses that are formed on hippocampus neurons. Has no effect on inhibitory synapses. The polypeptide is Complement C1q-like protein 2 (C1ql2) (Mus musculus (Mouse)).